We begin with the raw amino-acid sequence, 425 residues long: Light-independent protochlorophyllide reductase subunit N (425 aa).

[4Fe-4S] cluster is bound by residues Cys-17, Cys-42, and Cys-103.

This sequence belongs to the BchN/ChlN family. In terms of assembly, protochlorophyllide reductase is composed of three subunits; ChlL, ChlN and ChlB. Forms a heterotetramer of two ChlB and two ChlN subunits. Requires [4Fe-4S] cluster as cofactor.

The enzyme catalyses chlorophyllide a + oxidized 2[4Fe-4S]-[ferredoxin] + 2 ADP + 2 phosphate = protochlorophyllide a + reduced 2[4Fe-4S]-[ferredoxin] + 2 ATP + 2 H2O. It participates in porphyrin-containing compound metabolism; chlorophyll biosynthesis (light-independent). Its function is as follows. Component of the dark-operative protochlorophyllide reductase (DPOR) that uses Mg-ATP and reduced ferredoxin to reduce ring D of protochlorophyllide (Pchlide) to form chlorophyllide a (Chlide). This reaction is light-independent. The NB-protein (ChlN-ChlB) is the catalytic component of the complex. This Synechococcus sp. (strain CC9605) protein is Light-independent protochlorophyllide reductase subunit N.